A 370-amino-acid polypeptide reads, in one-letter code: Protein STRICTOSIDINE SYNTHASE-LIKE 9 (370 aa).

The first 26 residues, 1–26 (MPINQKIPTWFAVPAVFAVLSVISYQ), serve as a signal peptide directing secretion. Residues Asn97 and Asn171 are each glycosylated (N-linked (GlcNAc...) asparagine).

This sequence belongs to the strictosidine synthase family.

The protein resides in the vacuole. This Arabidopsis thaliana (Mouse-ear cress) protein is Protein STRICTOSIDINE SYNTHASE-LIKE 9.